A 191-amino-acid polypeptide reads, in one-letter code: Holliday junction branch migration complex subunit RuvA (191 aa).

The tract at residues Met1–Ala64 is domain I. Residues Thr65–His140 are domain II. The flexible linker stretch occupies residues His140 to Pro142. Residues Ala143–Lys191 form a domain III region.

This sequence belongs to the RuvA family. As to quaternary structure, homotetramer. Forms an RuvA(8)-RuvB(12)-Holliday junction (HJ) complex. HJ DNA is sandwiched between 2 RuvA tetramers; dsDNA enters through RuvA and exits via RuvB. An RuvB hexamer assembles on each DNA strand where it exits the tetramer. Each RuvB hexamer is contacted by two RuvA subunits (via domain III) on 2 adjacent RuvB subunits; this complex drives branch migration. In the full resolvosome a probable DNA-RuvA(4)-RuvB(12)-RuvC(2) complex forms which resolves the HJ.

It localises to the cytoplasm. Functionally, the RuvA-RuvB-RuvC complex processes Holliday junction (HJ) DNA during genetic recombination and DNA repair, while the RuvA-RuvB complex plays an important role in the rescue of blocked DNA replication forks via replication fork reversal (RFR). RuvA specifically binds to HJ cruciform DNA, conferring on it an open structure. The RuvB hexamer acts as an ATP-dependent pump, pulling dsDNA into and through the RuvAB complex. HJ branch migration allows RuvC to scan DNA until it finds its consensus sequence, where it cleaves and resolves the cruciform DNA. This chain is Holliday junction branch migration complex subunit RuvA, found in Verminephrobacter eiseniae (strain EF01-2).